Here is an 87-residue protein sequence, read N- to C-terminus: MLVLQLAVLVTAVYAFVHAALQRPDAYTAAEKLTKPVWLVILGAAVSLTSILGFVFGVLGIVIAACAAGVYLVDVRPKLLDIQGKSR.

Positions 1-19 (MLVLQLAVLVTAVYAFVHA) are cleaved as a signal peptide. A helical transmembrane segment spans residues 51–71 (ILGFVFGVLGIVIAACAAGVY).

This sequence to M.tuberculosis Rv0476.

Its subcellular location is the membrane. This is an uncharacterized protein from Mycobacterium leprae (strain TN).